Reading from the N-terminus, the 581-residue chain is Threonine--tRNA ligase (581 aa).

Residues 185–478 (DHRKLGKELD…LIEHYGGAFP (294 aa)) form a catalytic region. Zn(2+) is bound by residues Cys278, His329, and His455.

The protein belongs to the class-II aminoacyl-tRNA synthetase family. In terms of assembly, homodimer. It depends on Zn(2+) as a cofactor.

It localises to the cytoplasm. The catalysed reaction is tRNA(Thr) + L-threonine + ATP = L-threonyl-tRNA(Thr) + AMP + diphosphate + H(+). Catalyzes the attachment of threonine to tRNA(Thr) in a two-step reaction: L-threonine is first activated by ATP to form Thr-AMP and then transferred to the acceptor end of tRNA(Thr). Also edits incorrectly charged L-seryl-tRNA(Thr). This chain is Threonine--tRNA ligase, found in Borreliella afzelii (strain PKo) (Borrelia afzelii).